The sequence spans 195 residues: MRQQQAGGVGDGVSPGNVPVCYYGPGGRVPSSLERRARAAEVLLRCAACGLAVLAAALLGADRQTRVFFSIQKVARYTDMQSLVLLVIANGMAACYSLIQCARCLVMAYIVISAVAAAMEAALIGKYGQPEFQWMKTCHLYKRFCAQAGGGVACAIAASVNMVGVALISAFNLFRLYGNSNGGGKATTTTMAGGK.

Over 1-38 the chain is Cytoplasmic; the sequence is MRQQQAGGVGDGVSPGNVPVCYYGPGGRVPSSLERRAR. The chain crosses the membrane as a helical span at residues 39–59; that stretch reads AAEVLLRCAACGLAVLAAALL. Residues 60 to 81 are Extracellular-facing; that stretch reads GADRQTRVFFSIQKVARYTDMQ. Residues 82 to 102 traverse the membrane as a helical segment; sequence SLVLLVIANGMAACYSLIQCA. Residues 103 to 104 lie on the Cytoplasmic side of the membrane; that stretch reads RC. Residues 105 to 125 form a helical membrane-spanning segment; the sequence is LVMAYIVISAVAAAMEAALIG. Topologically, residues 126-150 are extracellular; it reads KYGQPEFQWMKTCHLYKRFCAQAGG. The chain crosses the membrane as a helical span at residues 151 to 171; that stretch reads GVACAIAASVNMVGVALISAF. Over 172-195 the chain is Cytoplasmic; sequence NLFRLYGNSNGGGKATTTTMAGGK.

Belongs to the Casparian strip membrane proteins (CASP) family. As to quaternary structure, homodimer and heterodimers.

It localises to the cell membrane. In Oryza sativa subsp. japonica (Rice), this protein is CASP-like protein Os03g0196400.